The primary structure comprises 603 residues: Spastin (603 aa).

Positions 1–34 (MNSPGGRNNKKKPVTPAAETGPGPPTPPPPPAET) are disordered. Residues 1–54 (MNSPGGRNNKKKPVTPAAETGPGPPTPPPPPAETQVLLAPPSLHKRNLYLFSYP) are Cytoplasmic-facing. Over residues 22–32 (PGPPTPPPPPA) the composition is skewed to pro residues. The segment at residues 55–75 (LLAAFSLLRFLAFQLGLLFVW) is an intramembrane region (helical). At 76–603 (FCERLSRRVM…WNKEFGDTTV (528 aa)) the chain is on the cytoplasmic side. One can recognise an MIT domain in the interval 113 to 188 (YHQQAFQYIS…LMAKDRLQLL (76 aa)). The interval 216–294 (GLLKPEKGAV…RTNKPTTPTT (79 aa)) is disordered. Positions 219–231 (KPEKGAVPKKKDP) are enriched in basic and acidic residues. A compositionally biased stretch (low complexity) spans 281–294 (KNNTRTNKPTTPTT). 369 to 376 (GPPGNGKT) contacts ATP.

It belongs to the AAA ATPase family. Spastin subfamily. In terms of assembly, homohexamer. The homohexamer is stabilized by ATP-binding. The homohexamer may adopt a ring conformation through which microtubules pass prior to being severed. Interacts with microtubules.

The protein localises to the membrane. It localises to the cytoplasm. The protein resides in the cytoskeleton. It is found in the microtubule organizing center. Its subcellular location is the centrosome. The protein localises to the perinuclear region. It localises to the nucleus. The enzyme catalyses n ATP + n H2O + a microtubule = n ADP + n phosphate + (n+1) alpha/beta tubulin heterodimers.. Functionally, ATP-dependent microtubule severing protein that specifically recognizes and cuts microtubules that are polyglutamylated. Preferentially recognizes and acts on microtubules decorated with short polyglutamate tails: severing activity increases as the number of glutamates per tubulin rises from one to eight, but decreases beyond this glutamylation threshold. Microtubule severing promotes reorganization of cellular microtubule arrays and the release of microtubules from the centrosome following nucleation. Required for membrane traffic from the endoplasmic reticulum (ER) to the Golgi and for completion of the abscission stage of cytokinesis. Also plays a role in axon growth and the formation of axonal branches. This chain is Spastin, found in Xenopus tropicalis (Western clawed frog).